We begin with the raw amino-acid sequence, 382 residues long: Mannitol-1-phosphate 5-dehydrogenase (382 aa).

3 to 14 (ALHFGAGNIGRG) lines the NAD(+) pocket. Lys-269 carries the N6-acetyllysine modification.

This sequence belongs to the mannitol dehydrogenase family.

The catalysed reaction is D-mannitol 1-phosphate + NAD(+) = beta-D-fructose 6-phosphate + NADH + H(+). The polypeptide is Mannitol-1-phosphate 5-dehydrogenase (Escherichia coli O127:H6 (strain E2348/69 / EPEC)).